We begin with the raw amino-acid sequence, 438 residues long: Polycomb protein eed-A (438 aa).

Residues 1–67 are disordered; it reads MSEASGRAAG…NAPGRKAWGK (67 aa). Positions 40–57 are enriched in polar residues; sequence SIESGTNTERPDTPTNAA. 7 WD repeats span residues 88–131, 139–182, 185–225, 231–270, 301–338, 356–396, and 405–438; these read DHNQ…DIRL, DADE…CIKH, GHGN…LVAI, GHRD…MKTA, IHRN…DDID, SQCD…PHKA, and KCAS…DRLR.

The protein belongs to the WD repeat ESC family. Component of the prc2/eed-ezh2 complex. Interacts with yy1. Can interact with ezh2, hdac1 and taf9.

The protein resides in the nucleus. In terms of biological role, polycomb group (PcG) protein. Component of the prc2/eed-ezh2 complex, which methylates 'Lys-9' and 'Lys-27' of histone H3, leading to transcriptional repression of the affected target gene. The polypeptide is Polycomb protein eed-A (eed-a) (Xenopus laevis (African clawed frog)).